Consider the following 248-residue polypeptide: Type II methyltransferase M.AquIA (248 aa).

An SAM-dependent MTase C5-type domain is found at 3-248; the sequence is KKLISLFSGA…IKDRIKNHGY (246 aa). The active site involves C82.

This sequence belongs to the class I-like SAM-binding methyltransferase superfamily. C5-methyltransferase family. Heterodimer of an alpha and a beta subunit.

The enzyme catalyses a 2'-deoxycytidine in DNA + S-adenosyl-L-methionine = a 5-methyl-2'-deoxycytidine in DNA + S-adenosyl-L-homocysteine + H(+). In terms of biological role, a methylase, recognizes the double-stranded sequence 5'-CYCGRG-3', methylates C-1 on both strands, and protects the DNA from cleavage by the AquI endonuclease. The polypeptide is Type II methyltransferase M.AquIA (aquIMA) (Picosynechococcus sp. (strain ATCC 27264 / PCC 7002 / PR-6) (Agmenellum quadruplicatum)).